The following is a 726-amino-acid chain: Prolyl endopeptidase-like (726 aa).

Position 138 is a phosphoserine (Ser-138). Residues Ser-558, Asp-644, and His-689 each act as charge relay system in the active site.

This sequence belongs to the peptidase S9A family. Homodimer. Interacts with the AP-1 complex.

The protein resides in the cytoplasm. It localises to the cytosol. Its subcellular location is the golgi apparatus. It is found in the trans-Golgi network. The protein localises to the cytoskeleton. The protein resides in the nucleus. Serine peptidase whose precise substrate specificity remains unclear. Does not cleave peptides after a arginine or lysine residue. Regulates trans-Golgi network morphology and sorting by regulating the membrane binding of the AP-1 complex. May play a role in the regulation of synaptic vesicle exocytosis. The sequence is that of Prolyl endopeptidase-like (Prepl) from Rattus norvegicus (Rat).